A 391-amino-acid polypeptide reads, in one-letter code: Large envelope protein (391 aa).

Methionine 1 carries the N-acetylmethionine modification. Residue glycine 2 is the site of N-myristoyl glycine; by host attachment. The interval 2 to 108 is pre-S1; that stretch reads GLNQSTFNPL…PPLRDTHPQA (107 aa). Positions 2 to 163 are pre-S; it reads GLNQSTFNPL…FSTTGVPVST (162 aa). At 2-170 the chain is on the virion surface; in external conformation side; that stretch reads GLNQSTFNPL…VSTMDITSSG (169 aa). Over 2–242 the chain is Intravirion; in internal conformation; that stretch reads GLNQSTFNPL…PGYRWMCLRR (241 aa). The interval 73–107 is disordered; sequence LSVTVPDTPPPPSTNRDKGRKPTPATPPLRDTHPQ. The interval 109-163 is pre-S2; the sequence is MTWNTSSFQSYLQNPKVRGLYFPAGGSTSSIVNPVPTTASTTSSSFSTTGVPVST. Residues 171–191 form a helical membrane-spanning segment; that stretch reads FLGPLLALQAVFFLLTKILTM. At 192-242 the chain is on the intravirion; in external conformation side; sequence PQSLDSLWTSLNFLGGTPACPGLNSQSPTSSHSPTCCPPTCPGYRWMCLRR. Residues 243-263 form a helical membrane-spanning segment; it reads SIIFLFILLLCLIFLLVLLDY. Residues 264-339 are Virion surface-facing; sequence QGMLPVCPLL…WALARFSWLN (76 aa). Asparagine 311 is a glycosylation site (N-linked (GlcNAc...) asparagine; by host). A helical transmembrane segment spans residues 340–360; the sequence is SLLPFVQWFAGLSPTVWLLVI. Topologically, residues 361 to 366 are intravirion; that stretch reads WMMWFW. A helical transmembrane segment spans residues 367–389; sequence GPSLFSILSPFLPLLPLFFWLWA. Topologically, residues 390-391 are virion surface; sequence YI.

Belongs to the orthohepadnavirus major surface antigen family. In its internal form (Li-HBsAg), interacts with the capsid protein and with the isoform S. Interacts with host chaperone CANX. As to quaternary structure, associates with host chaperone CANX through its pre-S2 N glycan; this association may be essential for isoform M proper secretion. In terms of assembly, interacts with isoform L. Interacts with the antigens of satellite virus HDV (HDVAgs); this interaction is required for encapsidation of HDV genomic RNA. In terms of processing, isoform M is N-terminally acetylated by host at a ratio of 90%, and N-glycosylated by host at the pre-S2 region. Post-translationally, myristoylated.

It is found in the virion membrane. In terms of biological role, the large envelope protein exists in two topological conformations, one which is termed 'external' or Le-HBsAg and the other 'internal' or Li-HBsAg. In its external conformation the protein attaches the virus to cell receptors and thereby initiating infection. This interaction determines the species specificity and liver tropism. This attachment induces virion internalization predominantly through caveolin-mediated endocytosis. The large envelope protein also assures fusion between virion membrane and endosomal membrane. In its internal conformation the protein plays a role in virion morphogenesis and mediates the contact with the nucleocapsid like a matrix protein. The middle envelope protein plays an important role in the budding of the virion. It is involved in the induction of budding in a nucleocapsid independent way. In this process the majority of envelope proteins bud to form subviral lipoprotein particles of 22 nm of diameter that do not contain a nucleocapsid. The sequence is that of Large envelope protein from Woolly monkey hepatitis B virus (isolate Louisville) (WMHBV).